Here is a 437-residue protein sequence, read N- to C-terminus: Glucose-1-phosphate adenylyltransferase (437 aa).

Alpha-D-glucose 1-phosphate is bound by residues tyrosine 113, glycine 179, 194–195 (EK), and serine 212.

The protein belongs to the bacterial/plant glucose-1-phosphate adenylyltransferase family. As to quaternary structure, homotetramer.

The enzyme catalyses alpha-D-glucose 1-phosphate + ATP + H(+) = ADP-alpha-D-glucose + diphosphate. The protein operates within glycan biosynthesis; glycogen biosynthesis. Its function is as follows. Involved in the biosynthesis of ADP-glucose, a building block required for the elongation reactions to produce glycogen. Catalyzes the reaction between ATP and alpha-D-glucose 1-phosphate (G1P) to produce pyrophosphate and ADP-Glc. The sequence is that of Glucose-1-phosphate adenylyltransferase from Haemophilus influenzae (strain 86-028NP).